We begin with the raw amino-acid sequence, 204 residues long: N-(5'-phosphoribosyl)anthranilate isomerase (204 aa).

The protein belongs to the TrpF family.

The catalysed reaction is N-(5-phospho-beta-D-ribosyl)anthranilate = 1-(2-carboxyphenylamino)-1-deoxy-D-ribulose 5-phosphate. Its pathway is amino-acid biosynthesis; L-tryptophan biosynthesis; L-tryptophan from chorismate: step 3/5. This Bacillus cereus (strain Q1) protein is N-(5'-phosphoribosyl)anthranilate isomerase.